A 677-amino-acid chain; its full sequence is UvrABC system protein B (677 aa).

Residues 31–417 enclose the Helicase ATP-binding domain; the sequence is DRIESGETDI…SDGVVEQIIR (387 aa). Residue 44 to 51 coordinates ATP; it reads GATGTGKS. The short motif at 97 to 120 is the Beta-hairpin element; it reads YYDYYQPEAYVPKTDTFIEKDASV. The region spanning 434-596 is the Helicase C-terminal domain; sequence QIDDLLEEIR…VTPVPIKKTV (163 aa). Residues 629 to 664 enclose the UVR domain; that stretch reads KSHIKSLEAKMYMAAESLMFEEAAELRDEIQSLKEK.

The protein belongs to the UvrB family. As to quaternary structure, forms a heterotetramer with UvrA during the search for lesions. Interacts with UvrC in an incision complex.

Its subcellular location is the cytoplasm. Functionally, the UvrABC repair system catalyzes the recognition and processing of DNA lesions. A damage recognition complex composed of 2 UvrA and 2 UvrB subunits scans DNA for abnormalities. Upon binding of the UvrA(2)B(2) complex to a putative damaged site, the DNA wraps around one UvrB monomer. DNA wrap is dependent on ATP binding by UvrB and probably causes local melting of the DNA helix, facilitating insertion of UvrB beta-hairpin between the DNA strands. Then UvrB probes one DNA strand for the presence of a lesion. If a lesion is found the UvrA subunits dissociate and the UvrB-DNA preincision complex is formed. This complex is subsequently bound by UvrC and the second UvrB is released. If no lesion is found, the DNA wraps around the other UvrB subunit that will check the other stand for damage. This Tropheryma whipplei (strain TW08/27) (Whipple's bacillus) protein is UvrABC system protein B.